The following is a 301-amino-acid chain: MSDAGGGKKPPVEPQAGPGPGRAAGERGLSGSFPLVLKKLMENPPRETRLDKEKGKEKLEEDESAAASTMAVSASLMPPIWDKTIPYDGESFHLEYMDLDEFLLENGIPASPTHLAQNLLLPVAELEGKESASSSTASPPSSSTAIFQPSETVSSTESSLEKERETPSPIDPSCVEVDVNFNPDPADLVLSSVPGGELFNPRKHRFAEEDLKPQPMIKKAKKVFVPDEQKDEKYWTRRKKNNVAAKRSRDARRLKENQITIRAAFLEKENTALRTEVAELRKEVGKCKTIVSKYETKYGPL.

2 disordered regions span residues 1–70 (MSDA…ASTM) and 130–174 (ESAS…DPSC). Phosphoserine is present on S30. Residues 39–59 (KLMENPPRETRLDKEKGKEKL) show a composition bias toward basic and acidic residues. A compositionally biased stretch (low complexity) spans 131–158 (SASSSTASPPSSSTAIFQPSETVSSTES). Residues 231–294 (DEKYWTRRKK…GKCKTIVSKY (64 aa)) enclose the bZIP domain. The interval 233 to 253 (KYWTRRKKNNVAAKRSRDARR) is basic motif. The segment at 254-261 (LKENQITI) is leucine-zipper.

It belongs to the bZIP family. PAR subfamily. As to quaternary structure, binds DNA as a homodimer or a heterodimer. Can form a heterodimer with DBP. As to expression, isoform Alpha and isoform Beta are expressed at high levels in lung, bladder, kidney, gut and brain.

It is found in the nucleus. Its function is as follows. Transcription factor that binds to and transactivates the TSHB promoter. Binds to a minimal DNA-binding sequence 5'-[TC][AG][AG]TTA[TC][AG]-3'. Also activates the telokin promoter in smooth muscle-specific and calcium-dependent manner. This is Thyrotroph embryonic factor (Tef) from Mus musculus (Mouse).